The chain runs to 393 residues: MNHSPQSARPVSIMRRFLDSEAAGGITLMAAAALALIVANSPFAQTYFDALHLYIGPLSLAHWINDALMAKFFLLVGLEIKREMLDGQLASWPNRMLPGIAAAGGVILPAIIFAVLNHDNPAKLRGWAVPSATDIAFALGVLSLLGSRAPSSLKVFLATLAILDDLAAVVIIAIFYTAEISMPYLGAAFITAAVLFVMNRMGVVKLLPYLISAVILWFFVFNSGVHATVAGVVAALMIPLKPAPGRPDDMTSPLHKLEHTLAKPVAFIVVPIFGFANAGISFKGLEASVLGDTLTLGILLGLFLGKQFGVFGAAWLAIKTGLAEKPMGASWVQLYGVAILCGIGFTMSIFIGLLSFPSDLMQTETKIGVLSGSALSAICGYLLLRAAARPKRG.

The next 12 membrane-spanning stretches (helical) occupy residues 23–43 (AGGI…NSPF), 58–78 (LSLA…LVGL), 96–116 (MLPG…FAVL), 126–146 (GWAV…SLLG), 155–175 (VFLA…IAIF), 178–198 (AEIS…LFVM), 201–221 (MGVV…FFVF), 224–244 (GVHA…KPAP), 265–285 (VAFI…FKGL), 298–318 (ILLG…WLAI), 334–354 (LYGV…IGLL), and 367–387 (IGVL…LRAA).

Belongs to the NhaA Na(+)/H(+) (TC 2.A.33) antiporter family.

Its subcellular location is the cell inner membrane. It catalyses the reaction Na(+)(in) + 2 H(+)(out) = Na(+)(out) + 2 H(+)(in). In terms of biological role, na(+)/H(+) antiporter that extrudes sodium in exchange for external protons. This chain is Na(+)/H(+) antiporter NhaA, found in Brucella suis (strain ATCC 23445 / NCTC 10510).